We begin with the raw amino-acid sequence, 9439 residues long: Extracellular matrix-binding protein ebh (9439 aa).

29 FIVAR domains span residues 1815–1871 (ARRR…VNSA), 1901–1957 (AKEQ…INDA), 1985–2041 (AYDT…VRDA), 2071–2127 (AKKR…ITSE), 2155–2211 (AYNK…VTQA), 2241–2297 (AKNR…ISSE), 2325–2381 (AYNK…VEDA), 2411–2467 (AKEK…ITEN), 2488–2551 (DTTS…VNNA), 2581–2638 (ARNR…STEI), 2665–2720 (AKNQ…IRTN), 2748–2804 (AKTA…VSDE), 2832–2888 (AYNQ…VNNA), 2918–2974 (AKEQ…ISNA), 3002–3058 (AYNQ…VTAA), 3088–3144 (AKQQ…ITNE), 3172–3228 (AYNQ…VAQA), 3258–3314 (AKNQ…ISDE), 3335–3398 (DTTE…VNNA), 3428–3484 (ARLN…ITTE), 3512–3567 (AKTA…IKTN), 3595–3650 (IKRQ…VKES), 3678–3733 (AKNR…IRQN), 3802–3860 (SMTA…IDQK), 3928–3983 (AMTQ…LDPA), 4056–4114 (AMQA…VNQK), 4182–4240 (SMGT…VDNA), 4308–4365 (AMHT…INQK), and 4433–4491 (VMEQ…IEQA). Basic and acidic residues predominate over residues 2495–2507 (EVRKLSRRGDTNN). The tract at residues 2495-2514 (EVRKLSRRGDTNNKKPSSVS) is disordered. A compositionally biased stretch (polar residues) spans 2925–2938 (AVDQVPSTEGMTQQ). A disordered region spans residues 2925-2951 (AVDQVPSTEGMTQQTKDDYNSKQQAAQ). The segment at 4522–4542 (LSGLTNEQKPKENQAVNGAQT) is disordered. Positions 4559 to 4617 (SMQTLRDLVNNQNAIHSTSNYFNEDSTQKNTYDNAIDNGSTYITGQHNPELNKSTIDQT) constitute an FIVAR 30 domain. The disordered stretch occupies residues 4648–4671 (LGYLNDPQKSGEESLVNGSNTRSE). FIVAR domains follow at residues 4685-4743 (AMKQ…IEQK), 4811-4869 (AMQA…IEQA), 4937-4995 (AMSN…IEQA), 5063-5115 (AMEA…VLDK), 5189-5246 (AMLG…INQL), 5314-5372 (LMGA…VTTA), 5440-5498 (AMGE…IDQA), 5566-5624 (AMKK…ITNA), 5692-5750 (AMKQ…IADT), 5818-5875 (DMST…LQDL), 5943-6000 (AMKA…IKQA), 6068-6126 (KMEE…INRT), 6194-6252 (AMQQ…IQAI), and 6320-6378 (EMGT…IADA). Residues 5699–5712 (QVNQDDQISNSSPF) show a composition bias toward polar residues. Residues 5699–5719 (QVNQDDQISNSSPFINEDSDK) form a disordered region. A disordered region spans residues 6413 to 6434 (NNSQRQSEHDEINSAPSRTEVS). 18 consecutive FIVAR domains span residues 6446–6504 (AMRQ…IEDA), 6572–6630 (AMKA…INRA), 6698–6755 (SMNQ…IDQA), 6823–6877 (TMKA…ANDE), 6949–7007 (AMKK…INTI), 7075–7133 (SMNT…VERA), 7201–7259 (DMKK…IENA), 7327–7384 (AMKH…IKQL), 7452–7510 (AMEN…IEHA), 7578–7636 (AMKA…INSI), 7704–7762 (AMET…VDIV), 7830–7888 (AMKS…VRQA), 7956–8010 (VMGK…TKQA), 8078–8137 (IMGE…IDTF), 8205–8264 (AMKS…IQGL), 8332–8391 (AMKD…VLGL), 8459–8518 (KMKL…IQHL), and 8587–8643 (AMQG…ANII). The chain crosses the membrane as a helical span at residues 9306-9324 (TVGVITLTGLLSSFWLVLA). Composition is skewed to basic and acidic residues over residues 9363–9375 (DKEE…DKHS), 9386–9395 (EKQLSEEDIH), and 9404–9413 (QNSDNKDTKQ). The segment at 9363–9439 (DKEEQIQNDD…VVKTKKRSKK (77 aa)) is disordered. Residues 9414-9439 (KKVTSKKKKTPQSTKKVVKTKKRSKK) are compositionally biased toward basic residues.

The protein resides in the cell membrane. This Staphylococcus epidermidis (strain ATCC 35984 / DSM 28319 / BCRC 17069 / CCUG 31568 / BM 3577 / RP62A) protein is Extracellular matrix-binding protein ebh (ebh).